The chain runs to 326 residues: Siroheme decarboxylase NirDL subunit (326 aa).

This sequence belongs to the Ahb/Nir family. Forms a complex composed of NirDL, NirG and NirH. All proteins are required for the total conversion of siroheme to didecarboxysiroheme.

The catalysed reaction is siroheme + 2 H(+) = 12,18-didecarboxysiroheme + 2 CO2. Its pathway is porphyrin-containing compound metabolism. Its function is as follows. Involved in heme d1 biosynthesis. Catalyzes the decarboxylation of siroheme into didecarboxysiroheme. Siroheme is probably decarboxylated to monodecarboxysiroheme, which is in turn decarboxylated to didecarboxysiroheme. In Paracoccus pantotrophus (Thiosphaera pantotropha), this protein is Siroheme decarboxylase NirDL subunit.